A 546-amino-acid polypeptide reads, in one-letter code: Phenylalanine--tRNA ligase beta subunit (546 aa).

Residues 266–342 (LAPAERVVSV…IAYGIENFDA (77 aa)) enclose the B5 domain. The Mg(2+) site is built by Asp-320, Asp-326, Glu-329, and Asp-330.

This sequence belongs to the phenylalanyl-tRNA synthetase beta subunit family. Type 2 subfamily. As to quaternary structure, tetramer of two alpha and two beta subunits. Requires Mg(2+) as cofactor.

The protein resides in the cytoplasm. The catalysed reaction is tRNA(Phe) + L-phenylalanine + ATP = L-phenylalanyl-tRNA(Phe) + AMP + diphosphate + H(+). In Methanoculleus marisnigri (strain ATCC 35101 / DSM 1498 / JR1), this protein is Phenylalanine--tRNA ligase beta subunit.